A 600-amino-acid polypeptide reads, in one-letter code: Baculoviral IAP repeat-containing protein 3 (600 aa).

The stretch at 27–94 (ELYRLSTYSA…RKLYPSCNFV (68 aa)) is one BIR 1 repeat. S138 is subject to Phosphoserine. 2 BIR repeats span residues 167–233 (EKAR…CPFL) and 253–320 (HAAR…CEYL). Zn(2+) is bound by residues C290, C293, H310, and C317. Residues 436–525 (EESDDLALIR…ALYRDIFVQQ (90 aa)) enclose the CARD domain. An RING-type zinc finger spans residues 553 to 588 (CKVCMDREVSIVFIPCGHLVVCKDCAPSLRKCPICR).

It belongs to the IAP family. As to quaternary structure, interacts with PRSS25; the interaction inhibits apoptotic suppressor activity. The BIR motifs region interacts with TNF receptor associated factors 1 and 2 (TRAF1 and TRAF2) to form a heteromeric complex, which is then recruited to the tumor necrosis factor receptor 2 (TNFR2). Interaction with TRAF2 is required for ubiquitination of IKBKE, degradation of NFKBIA and activation of NF-kappa-B. Interacts with RIP1, RIP2, RIP3, RIP4 and USP19. In terms of processing, auto-ubiquitinated and degraded by the proteasome in apoptotic cells.

The protein resides in the cytoplasm. It localises to the nucleus. It carries out the reaction S-ubiquitinyl-[E2 ubiquitin-conjugating enzyme]-L-cysteine + [acceptor protein]-L-lysine = [E2 ubiquitin-conjugating enzyme]-L-cysteine + N(6)-ubiquitinyl-[acceptor protein]-L-lysine.. With respect to regulation, USP19 regulates the stability of BIRC3/c-IAP2 by preventing its ubiquitination. In terms of biological role, multi-functional protein which regulates not only caspases and apoptosis, but also modulates inflammatory signaling and immunity, mitogenic kinase signaling and cell proliferation, as well as cell invasion and metastasis. Acts as an E3 ubiquitin-protein ligase regulating NF-kappa-B signaling and regulates both canonical and non-canonical NF-kappa-B signaling by acting in opposite directions: acts as a positive regulator of the canonical pathway and suppresses constitutive activation of non-canonical NF-kappa-B signaling. The target proteins for its E3 ubiquitin-protein ligase activity include: RIPK1, RIPK2, RIPK3, RIPK4, CASP3, CASP7, CASP8, IKBKE, TRAF1, and BCL10. Acts as an important regulator of innate immune signaling via regulation of Toll-like receptors (TLRs), Nodlike receptors (NLRs) and RIG-I like receptors (RLRs), collectively referred to as pattern recognition receptors (PRRs). Protects cells from spontaneous formation of the ripoptosome, a large multi-protein complex that has the capability to kill cancer cells in a caspase-dependent and caspase-independent manner. Suppresses ripoptosome formation by ubiquitinating RIPK1 and CASP8. The protein is Baculoviral IAP repeat-containing protein 3 (Birc3) of Mus musculus (Mouse).